A 141-amino-acid chain; its full sequence is HTH-type transcriptional repressor NsrR (141 aa).

The region spanning 2–129 (QLTSFTDYGL…DNYTLADLVE (128 aa)) is the HTH rrf2-type domain. The H-T-H motif DNA-binding region spans 28 to 51 (ISEVTDVYGVSRNHMVKIINQLSR). Residues C91, C96, and C102 each coordinate [2Fe-2S] cluster.

Requires [2Fe-2S] cluster as cofactor.

Its function is as follows. Nitric oxide-sensitive repressor of genes involved in protecting the cell against nitrosative stress. May require iron for activity. This chain is HTH-type transcriptional repressor NsrR, found in Escherichia coli O157:H7 (strain EC4115 / EHEC).